Reading from the N-terminus, the 132-residue chain is D-ribose pyranase (132 aa).

The active-site Proton donor is the His20. Substrate-binding positions include Asp28, His99, and 121-123 (YSN).

This sequence belongs to the RbsD / FucU family. RbsD subfamily. Homodecamer.

It localises to the cytoplasm. The enzyme catalyses beta-D-ribopyranose = beta-D-ribofuranose. Its pathway is carbohydrate metabolism; D-ribose degradation; D-ribose 5-phosphate from beta-D-ribopyranose: step 1/2. Catalyzes the interconversion of beta-pyran and beta-furan forms of D-ribose. The protein is D-ribose pyranase of Pseudomonas putida (strain ATCC 47054 / DSM 6125 / CFBP 8728 / NCIMB 11950 / KT2440).